We begin with the raw amino-acid sequence, 317 residues long: 3'-5' exoribonuclease YhaM (317 aa).

The OB DNA-binding region spans 17-90 (FLLIKESTRG…QLKILSIRLS (74 aa)). One can recognise an HD domain in the interval 163–279 (HVVSMLAIGK…LHLIDLIDAK (117 aa)).

It belongs to the YhaM family.

Functionally, shows a 3'-5' exoribonuclease activity. This is 3'-5' exoribonuclease YhaM from Oceanobacillus iheyensis (strain DSM 14371 / CIP 107618 / JCM 11309 / KCTC 3954 / HTE831).